The primary structure comprises 38 residues: Large ribosomal subunit protein bL36 (38 aa).

The protein belongs to the bacterial ribosomal protein bL36 family.

The protein is Large ribosomal subunit protein bL36 of Psychrobacter cryohalolentis (strain ATCC BAA-1226 / DSM 17306 / VKM B-2378 / K5).